The following is a 77-amino-acid chain: U3-theraphotoxin-Hhn1k (77 aa).

The signal sequence occupies residues 1-14 (TFAGLVLLFVVCYA). A propeptide spanning residues 15–42 (SESEEKEFPKEMLSSIFAVDNDFKQEER) is cleaved from the precursor. Intrachain disulfides connect cysteine 44-cysteine 57 and cysteine 56-cysteine 69.

It belongs to the neurotoxin 10 (Hwtx-1) family. 51 (Hntx-8) subfamily. Hntx-8 sub-subfamily. In terms of tissue distribution, expressed by the venom gland.

It is found in the secreted. Ion channel inhibitor. This Cyriopagopus hainanus (Chinese bird spider) protein is U3-theraphotoxin-Hhn1k.